We begin with the raw amino-acid sequence, 307 residues long: Glutathione synthetase (307 aa).

One can recognise an ATP-grasp domain in the interval 120-304 (KLGALRFSRW…LADQTIERLR (185 aa)). 146 to 202 (AREQGDVVLKPLGGRAGLGVIRVQAEAPGLKALLELVTEQERLPVMAQRFLPDVTEG) provides a ligand contact to ATP. Mg(2+) contacts are provided by glutamate 275 and asparagine 277.

It belongs to the prokaryotic GSH synthase family. Mg(2+) serves as cofactor. It depends on Mn(2+) as a cofactor.

It catalyses the reaction gamma-L-glutamyl-L-cysteine + glycine + ATP = glutathione + ADP + phosphate + H(+). Its pathway is sulfur metabolism; glutathione biosynthesis; glutathione from L-cysteine and L-glutamate: step 2/2. The chain is Glutathione synthetase from Parasynechococcus marenigrum (strain WH8102).